The primary structure comprises 761 residues: Polyribonucleotide nucleotidyltransferase (761 aa).

Mg(2+) is bound by residues aspartate 532 and aspartate 538. The KH domain maps to 598-657; the sequence is PRVISVQIPVDKIGELIGPKGKTINAIQDETGADISIDEDGTVYIGAVDGPSAEAARAQV. The S1 motif domain occupies 669 to 741; it reads GEQFLGTVVK…DRGKLSLAPV (73 aa).

The protein belongs to the polyribonucleotide nucleotidyltransferase family. The cofactor is Mg(2+).

It is found in the cytoplasm. It carries out the reaction RNA(n+1) + phosphate = RNA(n) + a ribonucleoside 5'-diphosphate. Involved in mRNA degradation. Catalyzes the phosphorolysis of single-stranded polyribonucleotides processively in the 3'- to 5'-direction. The chain is Polyribonucleotide nucleotidyltransferase from Leifsonia xyli subsp. xyli (strain CTCB07).